A 178-amino-acid polypeptide reads, in one-letter code: ATP synthase subunit delta (178 aa).

Belongs to the ATPase delta chain family. F-type ATPases have 2 components, F(1) - the catalytic core - and F(0) - the membrane proton channel. F(1) has five subunits: alpha(3), beta(3), gamma(1), delta(1), epsilon(1). F(0) has three main subunits: a(1), b(2) and c(10-14). The alpha and beta chains form an alternating ring which encloses part of the gamma chain. F(1) is attached to F(0) by a central stalk formed by the gamma and epsilon chains, while a peripheral stalk is formed by the delta and b chains.

It is found in the cell membrane. Functionally, f(1)F(0) ATP synthase produces ATP from ADP in the presence of a proton or sodium gradient. F-type ATPases consist of two structural domains, F(1) containing the extramembraneous catalytic core and F(0) containing the membrane proton channel, linked together by a central stalk and a peripheral stalk. During catalysis, ATP synthesis in the catalytic domain of F(1) is coupled via a rotary mechanism of the central stalk subunits to proton translocation. This protein is part of the stalk that links CF(0) to CF(1). It either transmits conformational changes from CF(0) to CF(1) or is implicated in proton conduction. The polypeptide is ATP synthase subunit delta (Lysinibacillus sphaericus (strain C3-41)).